The primary structure comprises 61 residues: Putative antitoxin APE_0472b.1 (61 aa).

It belongs to the UPF0165 family.

Its function is as follows. Possibly the antitoxin component of a type II toxin-antitoxin (TA) system. In Aeropyrum pernix (strain ATCC 700893 / DSM 11879 / JCM 9820 / NBRC 100138 / K1), this protein is Putative antitoxin APE_0472b.1.